Reading from the N-terminus, the 576-residue chain is TOX high mobility group box family member 3 (576 aa).

Disordered stretches follow at residues 189–258, 422–443, and 519–563; these read NLGG…PQKP, TMVG…QHQM, and LQHM…QIQS. The span at 204–215 shows a compositional bias: low complexity; that stretch reads ASKSATPSPSSS. The span at 223–239 shows a compositional bias: basic and acidic residues; the sequence is EANRAIGEKRAAPDSGK. Residues 240 to 250 are compositionally biased toward basic residues; it reads KPKTPKKKKKK. Residues 255–323 constitute a DNA-binding region (HMG box); it reads PQKPVSAYAL…EYLKALAAYR (69 aa). Residues 428–443 are compositionally biased toward low complexity; sequence PSTQVSPSVQTQQHQM. Over residues 528–542 the composition is skewed to polar residues; that stretch reads PSPRQHSPVASQITS. Over residues 549–563 the composition is skewed to low complexity; that stretch reads SPQPASQQHQSQIQS.

As to quaternary structure, homodimer. Interacts with CREB1; the interaction is not depolarization dependent. Interacts with CREBBP (via C-terminus). Interacts (via HGM box) with CITED1 (via C-terminus); the interaction increases estrogen-response element (ERE)-dependent transcription and protection against cell death. Interacts with CREB1 (phosphorylated form). In terms of tissue distribution, expressed mainly in epithelial cells. Expressed in the central nervous system (CNS), in the ileum and within the brain in the frontal and occipital lobe.

It is found in the nucleus. Transcriptional coactivator of the p300/CBP-mediated transcription complex. Activates transactivation through cAMP response element (CRE) sites. Protects against cell death by inducing antiapoptotic and repressing pro-apoptotic transcripts. Stimulates transcription from the estrogen-responsive or BCL-2 promoters. Required for depolarization-induced transcription activation of the C-FOS promoter in neurons. Associates with chromatin to the estrogen-responsive C3 promoter region. The chain is TOX high mobility group box family member 3 (TOX3) from Homo sapiens (Human).